The primary structure comprises 771 residues: Ribonucleoside-diphosphate reductase large subunit (771 aa).

An ATP-cone domain is found at 1–92 (MFVIKRNGYK…VSNLHKETKK (92 aa)). ATP-binding positions include 5-6 (KR), 11-17 (ENVMFDK), T53, D57, and K88. The GDP site is built by S202 and S217. Residues 226–228 (DSI), K243, and R256 contribute to the dTTP site. GDP is bound at residue N427. N427 acts as the Proton acceptor in catalysis. Catalysis depends on C429, which acts as the Cysteine radical intermediate. Residues E431 and 603–606 (TAST) contribute to the GDP site. The Proton acceptor role is filled by E431.

This sequence belongs to the ribonucleoside diphosphate reductase large chain family. As to quaternary structure, interacts with RNR2/OPG047 subunit. Mg(2+) is required as a cofactor.

It carries out the reaction a 2'-deoxyribonucleoside 5'-diphosphate + [thioredoxin]-disulfide + H2O = a ribonucleoside 5'-diphosphate + [thioredoxin]-dithiol. In terms of biological role, ribonucleoside-diphosphate reductase holoenzyme provides the precursors necessary for viral DNA synthesis. Allows virus growth in non-dividing cells. Catalyzes the biosynthesis of deoxyribonucleotides from the corresponding ribonucleotides. This Homo sapiens (Human) protein is Ribonucleoside-diphosphate reductase large subunit (OPG080).